The chain runs to 547 residues: CAP-Gly domain-containing linker protein 3 (547 aa).

A disordered region spans residues 1-49 (MTKTDPAPMAPPPRGEEEEEEEEDEPVPEAPSPTQERRQKPVVHPSAPA). Over residues 16–27 (EEEEEEEEDEPV) the composition is skewed to acidic residues. ANK repeat units follow at residues 117-155 (TDMT…DVTL), 160-189 (TNMN…PRVV), and 197-226 (NHGS…NPAL). Residues 314-356 (GTTEFASGQWVGVELDEPEGKNDGSVGGVRYFICPPKQGLFAS) enclose the CAP-Gly 1 domain. The disordered stretch occupies residues 365–413 (DAPPSSVTSTPRTPRMDFSRVTGKGRREHKGKKKTPSSPSLGSLQQRDR). Residues 367-377 (PPSSVTSTPRT) are compositionally biased toward low complexity. Threonine 374 is subject to Phosphothreonine. A compositionally biased stretch (basic residues) spans 387–399 (GKGRREHKGKKKT). Residues 400–409 (PSSPSLGSLQ) are compositionally biased toward polar residues. Serine 401 is subject to Phosphoserine. Residues 436 to 478 (GKTDFAPGYWYGIELDQPTGKHDGSVFGVRYFTCPPRHGVFAP) enclose the CAP-Gly 2 domain. Positions 488-547 (STDSPGDSVGAKKVHQVTMTQPKRTFTTVRTPKDIASENSISRLLFCCWFPWMLRAEMQS) are goLD. S-palmitoyl cysteine attachment occurs at residues cysteine 534 and cysteine 535.

In terms of assembly, homodimer. Interacts with AKT1 and AKT2; when AKT1 and AKT2 are phosphorylated and activated, affinity is higher for AKT2. Interacts with ZDHHC13 (via ANK repeats). Interacts with ZDHHC17 (via ANK repeats). Palmitoylation by ZDHHC17 regulates association with the plasma membrane.

Its subcellular location is the cell membrane. The protein resides in the cytoplasm. It is found in the golgi apparatus. It localises to the golgi stack. In terms of biological role, functions as a cytoplasmic linker protein. Involved in TGN-endosome dynamics. May modulate the cellular compartmentalization of AKT kinase family and promote its cell membrane localization, thereby playing a role in glucose transport in adipocytes. In Pongo abelii (Sumatran orangutan), this protein is CAP-Gly domain-containing linker protein 3 (CLIP3).